The following is a 547-amino-acid chain: NXPE family member 1 (547 aa).

The N-terminal stretch at 1–21 is a signal peptide; that stretch reads MSSNTMLQKTLLILISFSVVT. N-linked (GlcNAc...) asparagine glycans are attached at residues Asn39 and Asn211.

It belongs to the NXPE family.

It localises to the secreted. In Homo sapiens (Human), this protein is NXPE family member 1 (NXPE1).